The following is a 1032-amino-acid chain: Toll-like receptor 9 (1032 aa).

The N-terminal stretch at 1–25 (MGFCRSALHPLSLLVQAIMLAMTLA) is a signal peptide. The Extracellular portion of the chain corresponds to 26–818 (LGTLPAFLPC…CLDEALSWDC (793 aa)). A disulfide bridge links C35 with C45. 47–51 (WLFLK) lines the DNA pocket. LRR repeat units lie at residues 62 to 85 (RGNV…DFAH), 87 to 110 (PSLR…HFPC), 122 to 147 (VPTL…SLIS), 150 to 166 (LSHT…LAGL), 167 to 190 (HALR…ALEV), 198 to 221 (LGNL…LPSS), 223 to 242 (EYLL…DLAN), 243 to 268 (LTAL…CMEC), 283 to 306 (LSRL…WFRG), 308 to 332 (GNLR…AFQG), 333 to 356 (LTQL…HLSL), 363 to 386 (LVAL…TLRP), 390 to 413 (LPML…IFRA), and 415 to 440 (PGLR…MGEA). Residue N64 is glycosylated (N-linked (GlcNAc...) asparagine). DNA contacts are provided by residues 72–77 (SNRIHH) and 95–109 (KWNC…MHFP). C98 and C110 are disulfide-bonded. N129 carries N-linked (GlcNAc...) asparagine glycosylation. Y132 is a binding site for DNA. An intrachain disulfide couples C178 to C184. Residue 179–181 (YYK) coordinates DNA. Residue N200 is glycosylated (N-linked (GlcNAc...) asparagine). Y208 is a binding site for DNA. Residues N210 and N242 are each glycosylated (N-linked (GlcNAc...) asparagine). Disulfide bonds link C255–C268 and C258–C265. S-palmitoyl cysteine attachment occurs at residues C258 and C265. N300 is a glycosylation site (N-linked (GlcNAc...) asparagine). The N-linked (GlcNAc...) asparagine glycan is linked to N340. N-linked (GlcNAc...) asparagine glycosylation is found at N469, N474, and N513. 12 LRR repeats span residues 470 to 494 (CSTL…MFAQ), 496 to 519 (SHLQ…QFLP), 520 to 543 (LTGL…SFTE), 545 to 572 (PRLE…SFVA), 574 to 598 (LRTL…LCST), 600 to 622 (LRAL…LYLH), 627 to 650 (LSGL…TLRN), 652 to 675 (PKSL…SLHF), 676 to 699 (LPKL…SLPA), 701 to 723 (TRLR…FFSK), 724 to 747 (AKEL…WFGP), and 749 to 772 (ASAL…AFMD). A disulfide bond links C470 and C500. An N-linked (GlcNAc...) asparagine glycan is attached at N567. An N-linked (GlcNAc...) asparagine glycan is attached at N694. N731 carries an N-linked (GlcNAc...) asparagine glycan. Cystine bridges form between C764–C790 and C766–C809. Residues 819–839 (FALSLLAVALGLGVPMLHHLC) form a helical membrane-spanning segment. Residues 840-1032 (GWDLWYCFHL…RNFCQGPTAE (193 aa)) are Cytoplasmic-facing. A TIR domain is found at 868 to 1013 (LPYDAFVVFD…SFWAQLGMAL (146 aa)).

The protein belongs to the Toll-like receptor family. As to quaternary structure, monomer and homodimer. Exists as a monomer in the absence of unmethylated cytidine-phosphate-guanosine (CpG) ligand. Proteolytic processing of an insertion loop (Z-loop) is required for homodimerization upon binding to the unmethylated CpG ligand leading to its activation. Interacts with MYD88 via their respective TIR domains. Interacts with BTK. Interacts (via transmembrane domain) with UNC93B1. Interacts with CD300LH; the interaction may promote full activation of TLR9-triggered innate responses. Interacts with CNPY3 and HSP90B1; this interaction is required for proper folding in the endoplasmic reticulum. Interacts with SMPDL3B. Interacts with CD82; this interaction is essential for TLR9-dependent myddosome formation in response to CpG stimulation. Post-translationally, activated by proteolytic cleavage of the flexible loop between repeats LRR14 and LRR15 within the ectodomain. Cleavage requires UNC93B1. Proteolytically processed by first removing the majority of the ectodomain by either asparagine endopeptidase (AEP) or a cathepsin followed by a trimming event that is solely cathepsin mediated and required for optimal receptor signaling. In terms of processing, palmitoylated by ZDHHC3 in the Golgi regulates TLR9 trafficking from the Golgi to endosomes. Depalmitoylation by PPT1 controls the release of TLR9 from UNC93B1 in endosomes. As to expression, highly expressed in spleen, lymph node, tonsil and peripheral blood leukocytes, especially in plasmacytoid pre-dendritic cells. Levels are much lower in monocytes and CD11c+ immature dendritic cells. Also detected in lung and liver.

The protein resides in the endoplasmic reticulum membrane. Its subcellular location is the early endosome membrane. It is found in the lysosome. The protein localises to the cytoplasmic vesicle. It localises to the phagosome. The protein resides in the golgi apparatus membrane. Its function is as follows. Key component of innate and adaptive immunity. TLRs (Toll-like receptors) control host immune response against pathogens through recognition of molecular patterns specific to microorganisms. TLR9 is a nucleotide-sensing TLR which is activated by unmethylated cytidine-phosphate-guanosine (CpG) dinucleotides. Acts via MYD88 and TRAF6, leading to NF-kappa-B activation, cytokine secretion and the inflammatory response. Controls lymphocyte response to Helicobacter infection. Upon CpG stimulation, induces B-cell proliferation, activation, survival and antibody production. The sequence is that of Toll-like receptor 9 (TLR9) from Homo sapiens (Human).